The following is a 457-amino-acid chain: Argininosuccinate lyase (457 aa).

This sequence belongs to the lyase 1 family. Argininosuccinate lyase subfamily.

It localises to the cytoplasm. It catalyses the reaction 2-(N(omega)-L-arginino)succinate = fumarate + L-arginine. Its pathway is amino-acid biosynthesis; L-arginine biosynthesis; L-arginine from L-ornithine and carbamoyl phosphate: step 3/3. The chain is Argininosuccinate lyase from Haemophilus influenzae (strain PittGG).